The primary structure comprises 377 residues: Adaptive-response sensory kinase SasA (377 aa).

A Histidine kinase domain is found at 154–373 (MLVHDLRSPL…SFHFTLPVYR (220 aa)). Histidine 157 bears the Phosphohistidine; by autocatalysis mark.

In terms of assembly, homooligomerizes. Interacts with KaiC. Participates in the KaiABC clock complex, whose core is composed of a KaiC homohexamer, 6 KaiB and up to 6 KaiA dimers. SasA and KaiB(fs) compete to bind to KaiC.

It carries out the reaction ATP + protein L-histidine = ADP + protein N-phospho-L-histidine.. Member of the two-component regulatory system SasA/RpaA involved in genome-wide circadian gene expression. One of several clock output pathways. Participates in the Kai clock protein complex, the main circadian regulator in cyanobacteria, via its interaction with KaiC. KaiC enhances the autophosphorylation activity of SasA, which then transfers its phosphate group to RpaA to activate it. In addition to its output function, recruits fold-shifted KaiB (KaiB(fs)) to KaiC to cooperatively form the KaiB(6):KaiC(6) complex (independent of SasA kinase activity). Required for robustness of the circadian rhythm of gene expression and is involved in clock output, also required for adaptation to light/dark cycles. The polypeptide is Adaptive-response sensory kinase SasA (Synechococcus sp. (strain JA-3-3Ab) (Cyanobacteria bacterium Yellowstone A-Prime)).